Reading from the N-terminus, the 505-residue chain is Maturase K (505 aa).

It belongs to the intron maturase 2 family. MatK subfamily.

The protein resides in the plastid. The protein localises to the chloroplast. In terms of biological role, usually encoded in the trnK tRNA gene intron. Probably assists in splicing its own and other chloroplast group II introns. The chain is Maturase K from Coffea arabica (Arabian coffee).